Here is a 646-residue protein sequence, read N- to C-terminus: Protein real-time (646 aa).

The 174-residue stretch at 2–175 (VQKYESPVRI…FINELKKEGI (174 aa)) folds into the PRELI/MSF1 domain. Residues 294 to 471 (TPVVVEKYFP…FLGGSCITMI (178 aa)) enclose the CRAL-TRIO domain. Residues 499 to 646 (HHGLYKSVDL…GFSSNSLQSR (148 aa)) enclose the GOLD domain.

The protein resides in the mitochondrion. The protein is Protein real-time of Aedes aegypti (Yellowfever mosquito).